We begin with the raw amino-acid sequence, 223 residues long: Superoxide dismutase [Mn], mitochondrial (223 aa).

A mitochondrion-targeting transit peptide spans 1–24 (MNLIIGVAGRLLVGKNYCLNTQRL). Mn(2+) is bound by residues histidine 50, histidine 98, aspartate 184, and histidine 188.

The protein belongs to the iron/manganese superoxide dismutase family. In terms of assembly, homotetramer. The cofactor is Mn(2+).

It localises to the mitochondrion matrix. It catalyses the reaction 2 superoxide + 2 H(+) = H2O2 + O2. In terms of biological role, destroys superoxide anion radicals which are normally produced within the cells and which are toxic to biological systems. The chain is Superoxide dismutase [Mn], mitochondrial (sod-2) from Onchocerca volvulus.